The sequence spans 435 residues: MKVIVLGGGVLGVSTAWYLAKAGCQVTVLERQDGVALETSFGNAGQISPGYSAPWAAPGIPLKGLKWMFQRHAPLAITPDGSLYQLQWIAKMLANCNEKAYAVNKGRMMRLAEYSRDKIKELRAETGLQYEGRQGGTLQLLRSQAQVEGMAKDIAVLRECGVDFNVLDPDGCARVEPALAAVKHKLAGGLQLPNDETGDCNLFTSRLAELARDKGVEFRFGVTVDGIENDGKRITGVRIGDELLRADHYVVAMGSYSRDMVKELGIDIPVYPVKGYSLTVPITNPDGAPTSTILDETYKVAITRFDNRIRVGGMAELSGYNLELNPRRRETLEMVVGDLYPNGGDIKAASFWTGLRPMTPDGTPIIGGTRFANLSLNTGHGTLGWTMCAGSGKVLADIITGAKPEISVDGLSMQRYAKQGETLVVPVIRPAVQGA.

3–17 (VIVLGGGVLGVSTAW) provides a ligand contact to FAD.

It belongs to the DadA oxidoreductase family. FAD serves as cofactor.

The catalysed reaction is a D-alpha-amino acid + A + H2O = a 2-oxocarboxylate + AH2 + NH4(+). It functions in the pathway amino-acid degradation; D-alanine degradation; NH(3) and pyruvate from D-alanine: step 1/1. Functionally, oxidative deamination of D-amino acids. In Chromobacterium violaceum (strain ATCC 12472 / DSM 30191 / JCM 1249 / CCUG 213 / NBRC 12614 / NCIMB 9131 / NCTC 9757 / MK), this protein is D-amino acid dehydrogenase.